Consider the following 433-residue polypeptide: Glutamate--tRNA ligase (433 aa).

Positions 10-20 match the 'HIGH' region motif; the sequence is PSPTGYLHIGG. The 'KMSKS' region signature appears at 211–215; sequence KMSKR. K214 serves as a coordination point for ATP.

It belongs to the class-I aminoacyl-tRNA synthetase family. Glutamate--tRNA ligase type 1 subfamily. In terms of assembly, monomer.

The protein resides in the cytoplasm. It carries out the reaction tRNA(Glu) + L-glutamate + ATP = L-glutamyl-tRNA(Glu) + AMP + diphosphate. Catalyzes the attachment of glutamate to tRNA(Glu) in a two-step reaction: glutamate is first activated by ATP to form Glu-AMP and then transferred to the acceptor end of tRNA(Glu). This chain is Glutamate--tRNA ligase, found in Akkermansia muciniphila (strain ATCC BAA-835 / DSM 22959 / JCM 33894 / BCRC 81048 / CCUG 64013 / CIP 107961 / Muc).